Consider the following 1109-residue polypeptide: Coiled-coil domain-containing protein 158 (1109 aa).

Residues 1 to 12 (MESKACESKNED) are compositionally biased toward basic and acidic residues. A disordered region spans residues 1–31 (MESKACESKNEDLLPSGITSKGGSSSPFFVT). The segment covering 17-31 (GITSKGGSSSPFFVT) has biased composition (polar residues). 2 coiled-coil regions span residues 71 to 166 (GKEH…MLKD) and 242 to 828 (VEDQ…QEQE). 2 disordered regions span residues 843–897 (LQGP…DPTR) and 952–1061 (HRSN…TGKT). Polar residues-rich tracts occupy residues 862–882 (ASVT…SFLS), 953–970 (RSNN…SSET), and 988–998 (SCFTFTSTASP). Positions 999 to 1019 (SGKMSASRSFSSSPKKSPVHS) are enriched in low complexity. Composition is skewed to polar residues over residues 1020 to 1037 (LLTS…QYRS) and 1043 to 1061 (SPTS…TGKT). Residues 1053 to 1109 (PSLETTGKTCQKLQNRLESLQTLVEDLQLKNQAMSSMIRNQEKRIQKVKDQEKMLLK) adopt a coiled-coil conformation.

This Mus musculus (Mouse) protein is Coiled-coil domain-containing protein 158 (Ccdc158).